A 420-amino-acid polypeptide reads, in one-letter code: Glutamyl-tRNA reductase (420 aa).

Substrate is bound by residues 49-52 (TCNR), Ser-107, 112-114 (EPQ), and Gln-118. The active-site Nucleophile is Cys-50. 187-192 (GAGETI) is an NADP(+) binding site.

The protein belongs to the glutamyl-tRNA reductase family. Homodimer.

It catalyses the reaction (S)-4-amino-5-oxopentanoate + tRNA(Glu) + NADP(+) = L-glutamyl-tRNA(Glu) + NADPH + H(+). It participates in porphyrin-containing compound metabolism; protoporphyrin-IX biosynthesis; 5-aminolevulinate from L-glutamyl-tRNA(Glu): step 1/2. Its function is as follows. Catalyzes the NADPH-dependent reduction of glutamyl-tRNA(Glu) to glutamate 1-semialdehyde (GSA). The polypeptide is Glutamyl-tRNA reductase (Methylococcus capsulatus (strain ATCC 33009 / NCIMB 11132 / Bath)).